Consider the following 274-residue polypeptide: MSGTKIHPTALVEKGAQLGENVFVGPFCHISSEAVIGDGCSLMSHVVIMGKTTLGADSKVFSHAILGAEPQDNKHKGGYTTLSIGKNCTIREGVTMHRGSDSSVGMTIVGDNCQFFCYAHIAHDCRVGNNVTFANNVMIAGHVTVGDYVIIGGGAAVHQFVRVGHHAFIGGVSALVGDLIPYGTAVGVQAKLAGLNIIGMKRAGLERKDIHALRHAVAMLFDHSKPFKERVSDVASFYPASQSVVDVVNFIKEKGKRFYCTPKFEGDRIKENKD.

This sequence belongs to the transferase hexapeptide repeat family. LpxA subfamily. Homotrimer.

Its subcellular location is the cytoplasm. It catalyses the reaction a (3R)-hydroxyacyl-[ACP] + UDP-N-acetyl-alpha-D-glucosamine = a UDP-3-O-[(3R)-3-hydroxyacyl]-N-acetyl-alpha-D-glucosamine + holo-[ACP]. It participates in glycolipid biosynthesis; lipid IV(A) biosynthesis; lipid IV(A) from (3R)-3-hydroxytetradecanoyl-[acyl-carrier-protein] and UDP-N-acetyl-alpha-D-glucosamine: step 1/6. Its function is as follows. Involved in the biosynthesis of lipid A, a phosphorylated glycolipid that anchors the lipopolysaccharide to the outer membrane of the cell. The chain is Acyl-[acyl-carrier-protein]--UDP-N-acetylglucosamine O-acyltransferase from Bartonella henselae (strain ATCC 49882 / DSM 28221 / CCUG 30454 / Houston 1) (Rochalimaea henselae).